The primary structure comprises 252 residues: Triosephosphate isomerase (252 aa).

10–12 (NWK) is a binding site for substrate. His-96 functions as the Electrophile in the catalytic mechanism. Glu-168 functions as the Proton acceptor in the catalytic mechanism. Substrate-binding positions include Gly-174, Ser-213, and 234–235 (GG).

It belongs to the triosephosphate isomerase family. Homodimer.

It is found in the cytoplasm. The catalysed reaction is D-glyceraldehyde 3-phosphate = dihydroxyacetone phosphate. It functions in the pathway carbohydrate biosynthesis; gluconeogenesis. Its pathway is carbohydrate degradation; glycolysis; D-glyceraldehyde 3-phosphate from glycerone phosphate: step 1/1. Its function is as follows. Involved in the gluconeogenesis. Catalyzes stereospecifically the conversion of dihydroxyacetone phosphate (DHAP) to D-glyceraldehyde-3-phosphate (G3P). The protein is Triosephosphate isomerase of Idiomarina loihiensis (strain ATCC BAA-735 / DSM 15497 / L2-TR).